A 114-amino-acid chain; its full sequence is Ribonuclease P protein component (114 aa).

Belongs to the RnpA family. Consists of a catalytic RNA component (M1 or rnpB) and a protein subunit.

It catalyses the reaction Endonucleolytic cleavage of RNA, removing 5'-extranucleotides from tRNA precursor.. RNaseP catalyzes the removal of the 5'-leader sequence from pre-tRNA to produce the mature 5'-terminus. It can also cleave other RNA substrates such as 4.5S RNA. The protein component plays an auxiliary but essential role in vivo by binding to the 5'-leader sequence and broadening the substrate specificity of the ribozyme. The protein is Ribonuclease P protein component of Borrelia hermsii (strain HS1 / DAH).